A 133-amino-acid chain; its full sequence is Small ribosomal subunit protein uS11 (133 aa).

The segment at 1–23 (MPPKTRGAVRKPRKKDKKNIALG) is disordered. Basic residues predominate over residues 7–17 (GAVRKPRKKDK).

This sequence belongs to the universal ribosomal protein uS11 family. Part of the 30S ribosomal subunit. Interacts with proteins S7 and S18. Binds to IF-3.

In terms of biological role, located on the platform of the 30S subunit, it bridges several disparate RNA helices of the 16S rRNA. Forms part of the Shine-Dalgarno cleft in the 70S ribosome. The sequence is that of Small ribosomal subunit protein uS11 from Pseudarthrobacter chlorophenolicus (strain ATCC 700700 / DSM 12829 / CIP 107037 / JCM 12360 / KCTC 9906 / NCIMB 13794 / A6) (Arthrobacter chlorophenolicus).